The sequence spans 360 residues: MTSAALKPLSVAPARDRAASRPRIAVRRWLFLMAALVVAMVAVGGATRLTGSGLSITEWKPVTGAVPPLSAEAWAEEFAKYRATPQYDILNRGMSLAEFQVIYAWEWGHRFLGRLIGLCFFLPLGWFWWTGRLDRRLGLGLVGLGVLGGLQGAVGWIMVASGLQPGMVAVAPIKLAAHLTLASAIFAGLVWLAAGLDRPAEAAAPRRLRLTALLLPVATLLQIALGGLVAGSKAGLTYNTWPLMDGAFIPPVSGLFAATPWIENFVDNVALVQLNHRLVAYALLALALLHALDARRARPGSGAARRAAALAGLVAAQAMLGITTLLLAVPLWAGLAHQVTAMLVLGMAVAHARIGTLARG.

Transmembrane regions (helical) follow at residues tryptophan 29–leucine 49, phenylalanine 111–glycine 131, leucine 139–valine 159, leucine 175–glycine 195, leucine 210–alanine 230, valine 269–leucine 289, alanine 309–valine 329, and proline 330–alanine 350. Residue histidine 276 coordinates heme. Residue histidine 337 participates in heme binding.

The protein belongs to the COX15/CtaA family. Type 2 subfamily. Interacts with CtaB. It depends on heme b as a cofactor.

The protein resides in the cell membrane. It carries out the reaction Fe(II)-heme o + 2 A + H2O = Fe(II)-heme a + 2 AH2. It participates in porphyrin-containing compound metabolism; heme A biosynthesis; heme A from heme O: step 1/1. Its function is as follows. Catalyzes the conversion of heme O to heme A by two successive hydroxylations of the methyl group at C8. The first hydroxylation forms heme I, the second hydroxylation results in an unstable dihydroxymethyl group, which spontaneously dehydrates, resulting in the formyl group of heme A. In Methylobacterium sp. (strain 4-46), this protein is Heme A synthase.